Here is a 211-residue protein sequence, read N- to C-terminus: Thiamine-phosphate synthase (211 aa).

Residues 37 to 41 (QLRIK) and asparagine 69 contribute to the 4-amino-2-methyl-5-(diphosphooxymethyl)pyrimidine site. Positions 70 and 89 each coordinate Mg(2+). A 4-amino-2-methyl-5-(diphosphooxymethyl)pyrimidine-binding site is contributed by serine 108. 134–136 (TQT) lines the 2-[(2R,5Z)-2-carboxy-4-methylthiazol-5(2H)-ylidene]ethyl phosphate pocket. Lysine 137 contributes to the 4-amino-2-methyl-5-(diphosphooxymethyl)pyrimidine binding site. Residues glycine 166 and 186–187 (VS) each bind 2-[(2R,5Z)-2-carboxy-4-methylthiazol-5(2H)-ylidene]ethyl phosphate.

It belongs to the thiamine-phosphate synthase family. It depends on Mg(2+) as a cofactor.

The enzyme catalyses 2-[(2R,5Z)-2-carboxy-4-methylthiazol-5(2H)-ylidene]ethyl phosphate + 4-amino-2-methyl-5-(diphosphooxymethyl)pyrimidine + 2 H(+) = thiamine phosphate + CO2 + diphosphate. The catalysed reaction is 2-(2-carboxy-4-methylthiazol-5-yl)ethyl phosphate + 4-amino-2-methyl-5-(diphosphooxymethyl)pyrimidine + 2 H(+) = thiamine phosphate + CO2 + diphosphate. It catalyses the reaction 4-methyl-5-(2-phosphooxyethyl)-thiazole + 4-amino-2-methyl-5-(diphosphooxymethyl)pyrimidine + H(+) = thiamine phosphate + diphosphate. The protein operates within cofactor biosynthesis; thiamine diphosphate biosynthesis; thiamine phosphate from 4-amino-2-methyl-5-diphosphomethylpyrimidine and 4-methyl-5-(2-phosphoethyl)-thiazole: step 1/1. Functionally, condenses 4-methyl-5-(beta-hydroxyethyl)thiazole monophosphate (THZ-P) and 2-methyl-4-amino-5-hydroxymethyl pyrimidine pyrophosphate (HMP-PP) to form thiamine monophosphate (TMP). This chain is Thiamine-phosphate synthase, found in Escherichia coli O1:K1 / APEC.